The chain runs to 238 residues: NEDD4-binding protein 2-like 1 (238 aa).

Disordered regions lie at residues 1 to 36 and 183 to 212; these read MEDS…PRRH and VLHA…WNTY. Positions 20-31 are enriched in pro residues; the sequence is QPPPRPPPARGP. Positions 192-212 are enriched in polar residues; sequence ANRNQGRNSEPSSGSGYWNTY.

Interacts with dynactin subunit proteins, including DCTN4, DCTN5 and DCTN5.

In terms of biological role, might play a role in adipocyte differentiation and triglyceride accumulation. This is NEDD4-binding protein 2-like 1 (N4bp2l1) from Mus musculus (Mouse).